The primary structure comprises 502 residues: Dynein regulatory complex subunit 2 (502 aa).

2 coiled-coil regions span residues 96 to 160 (DSVI…RKAI) and 252 to 285 (EKSS…HSRE).

The protein belongs to the DRC2 family. Component of the nexin-dynein regulatory complex (N-DRC). Interacts with DRC1.

It is found in the cytoplasm. It localises to the cytoskeleton. Its subcellular location is the flagellum basal body. The protein localises to the cell projection. The protein resides in the cilium. It is found in the flagellum. It localises to the flagellum axoneme. In terms of biological role, component of the nexin-dynein regulatory complex (N-DRC), a key regulator of ciliary/flagellar motility which maintains the alignment and integrity of the distal axoneme and regulates microtubule sliding in motile axonemes. Plays a critical role in the assembly of N-DRC and also stabilizes the assembly of multiple inner dynein arms and radial spokes. Coassembles with DRC1 to form a central scaffold needed for assembly of the N-DRC and its attachment to the outer doublet microtubules. The chain is Dynein regulatory complex subunit 2 (Ccdc65) from Rattus norvegicus (Rat).